The following is a 539-amino-acid chain: 4-hydroxybenzoate--CoA/benzoate--CoA ligase (539 aa).

Belongs to the ATP-dependent AMP-binding enzyme family. Benzoate-CoA ligase subfamily. As to quaternary structure, homodimer. In terms of processing, the N-terminus is blocked.

The enzyme catalyses 4-hydroxybenzoate + ATP + CoA = 4-hydroxybenzoyl-CoA + AMP + diphosphate. It carries out the reaction benzoate + ATP + CoA = benzoyl-CoA + AMP + diphosphate. Catalyzes the ligation of 4-hydroxybenzoate, benzoate or cyclohex-1,4-dienecarboxylate and CoA at the expense of ATP. The enzyme shows low activity towards cyclo-2,5-dienecarboxylate, 4-fluorobenzoate, 4-chlorobenzoate and 2-methoxybenzoate. The chain is 4-hydroxybenzoate--CoA/benzoate--CoA ligase (hbaA) from Rhodopseudomonas palustris (strain ATCC BAA-98 / CGA009).